A 208-amino-acid chain; its full sequence is Microtubule-associated protein Jupiter (208 aa).

Disordered stretches follow at residues 24–43 and 82–106; these read RPPGGGSSDIFGSEMPQTPR and RGQKTVDSHSRLFGEPTRPITPGKN. Ser-30 is modified (phosphoserine). Phosphothreonine is present on Thr-41. The span at 82-93 shows a compositional bias: basic and acidic residues; it reads RGQKTVDSHSRL. 2 positions are modified to phosphothreonine: Thr-98 and Thr-102. Ser-111, Ser-139, and Ser-150 each carry phosphoserine. The interval 132–208 is disordered; that stretch reads HYNGKSGSVS…PPGGYSSGLW (77 aa). Residues 137 to 150 are compositionally biased toward low complexity; it reads SGSVSSASSSVSSS. Composition is skewed to polar residues over residues 151 to 165 and 178 to 189; these read TENLKMNSGSRSEGN and EYSQRQESSNGG.

The protein belongs to the MAP Jupiter family. In terms of tissue distribution, ubiquitous expression throughout development. Expressed during cell division in the syncytial embryo. Expressed in developing photoreceptors of the eye imaginal disk of the third larval stage. In adults, highly expressed in neurons of the brain, concentrated in axons. In the adult ovaries, expression accumulates in the germarium and the polar follicular cells as well as in the oocyte along the microtubule network.

It localises to the nucleus. The protein localises to the cytoplasm. It is found in the cytoskeleton. Its subcellular location is the spindle. Its function is as follows. Binds to all microtubule populations. This Drosophila melanogaster (Fruit fly) protein is Microtubule-associated protein Jupiter.